The sequence spans 70 residues: uncharacterized protein (70 aa).

The N-terminal stretch at 1-16 (MKLLLVLITLIIAALA) is a signal peptide.

This is an uncharacterized protein from Orgyia pseudotsugata (Douglas-fir tussock moth).